A 51-amino-acid chain; its full sequence is Large ribosomal subunit protein eL39 (51 aa).

The protein belongs to the eukaryotic ribosomal protein eL39 family.

This is Large ribosomal subunit protein eL39 from Saccharolobus islandicus (strain Y.N.15.51 / Yellowstone #2) (Sulfolobus islandicus).